Here is a 1035-residue protein sequence, read N- to C-terminus: GRB10-interacting GYF protein 1 (1035 aa).

S24, S28, S137, and S157 each carry phosphoserine. Residues 105 to 422 (KGAGPPLAGT…AGPPGDLEDD (318 aa)) form a disordered region. 2 stretches are compositionally biased toward basic and acidic residues: residues 148–179 (SPRE…RCGF) and 186–203 (PRKE…SLRE). S230 is subject to Phosphoserine. A compositionally biased stretch (basic and acidic residues) spans 239-267 (GWREHGERRRKFEFDLRGDRGGCGEEEGR). 2 stretches are compositionally biased toward acidic residues: residues 295–304 (CLDDEDEEMG) and 324–349 (PEEQ…EEGP). S341 carries the phosphoserine modification. Over residues 367–378 (SSPSPLPTLGPL) the composition is skewed to low complexity. Positions 388-401 (TAEKEPPAAEDDIR) are enriched in basic and acidic residues. S406 is modified (phosphoserine). Residues 406 to 417 (SPGVGSSAGPPG) show a composition bias toward low complexity. Positions 474–522 (ARKWFYKDPQGEIQGPFTTQEMAEWFQAGYFSMSLLVKRGCDEGFQPLG) constitute a GYF domain. Phosphoserine occurs at positions 538 and 638. Disordered stretches follow at residues 621–640 (PPRG…LSVP), 696–724 (KREE…QEEE), and 825–879 (WGGP…RPIR). Residues 629-639 (LLPTMSRSLSV) show a composition bias toward polar residues. Basic and acidic residues predominate over residues 696–722 (KREEEERKRREEKRRQQQQEEQKRRQE). Over residues 857–874 (LKNSRSSPSLSDSYSHLS) the composition is skewed to low complexity. S862 is subject to Phosphoserine.

This sequence belongs to the GIGYF family. Interacts with GRB10. This transient binding is increased under IGF1 stimulation and leads to recruitment of GIGYF1/GRB10 complex to IGF1 receptor. Interacts with DDX6.

Its function is as follows. May act cooperatively with GRB10 to regulate tyrosine kinase receptor signaling. May increase IGF1 receptor phosphorylation under IGF1 stimulation as well as phosphorylation of IRS1 and SHC1. In Homo sapiens (Human), this protein is GRB10-interacting GYF protein 1 (GIGYF1).